The sequence spans 131 residues: MSWQAYVDDHLMCDIDGNRLTAAAILGQDGSVWSQSASFPAFKPEEIAAILKDFDQPGTLAPTGLFLGGTKYMVIQGEPGAVIRGKKGSGGITIKKTSQALLIGIYDEPVTPGQCNIVVERLGDYLIEQGL.

It belongs to the profilin family. In terms of assembly, occurs in many kinds of cells as a complex with monomeric actin in a 1:1 ratio.

Its subcellular location is the cytoplasm. It is found in the cytoskeleton. In terms of biological role, binds to actin and affects the structure of the cytoskeleton. At high concentrations, profilin prevents the polymerization of actin, whereas it enhances it at low concentrations. By binding to PIP2, it inhibits the formation of IP3 and DG. The protein is Profilin-3 of Malus domestica (Apple).